The sequence spans 763 residues: Phosphoglycerol transferase I (763 aa).

4 helical membrane-spanning segments follow: residues 1–21 (MSEL…AWKA), 26–46 (WWFA…ITLY), 77–97 (ILPG…LGWV), and 108–128 (FGYS…SPAF).

Belongs to the OpgB family.

Its subcellular location is the cell inner membrane. The catalysed reaction is a phosphatidylglycerol + a membrane-derived-oligosaccharide D-glucose = a 1,2-diacyl-sn-glycerol + a membrane-derived-oligosaccharide 6-(glycerophospho)-D-glucose.. Its pathway is glycan metabolism; osmoregulated periplasmic glucan (OPG) biosynthesis. Functionally, transfers a phosphoglycerol residue from phosphatidylglycerol to the membrane-bound nascent glucan backbones. This is Phosphoglycerol transferase I from Citrobacter koseri (strain ATCC BAA-895 / CDC 4225-83 / SGSC4696).